Reading from the N-terminus, the 92-residue chain is Small ribosomal subunit protein uS19 (92 aa).

It belongs to the universal ribosomal protein uS19 family.

In terms of biological role, protein S19 forms a complex with S13 that binds strongly to the 16S ribosomal RNA. The sequence is that of Small ribosomal subunit protein uS19 from Staphylococcus aureus (strain Mu3 / ATCC 700698).